A 122-amino-acid polypeptide reads, in one-letter code: Large ribosomal subunit protein uL14 (122 aa).

Belongs to the universal ribosomal protein uL14 family. Part of the 50S ribosomal subunit. Forms a cluster with proteins L3 and L19. In the 70S ribosome, L14 and L19 interact and together make contacts with the 16S rRNA in bridges B5 and B8.

Its function is as follows. Binds to 23S rRNA. Forms part of two intersubunit bridges in the 70S ribosome. The chain is Large ribosomal subunit protein uL14 from Buchnera aphidicola subsp. Schizaphis graminum (strain Sg).